The primary structure comprises 137 residues: Methylmalonyl-CoA decarboxylase subunit delta (137 aa).

A helical transmembrane segment spans residues 30-50 (VTVVLGMGITVVALIFLMYII).

Belongs to the OadG family. In terms of assembly, the methylmalonyl-CoA decarboxylase is composed of four subunits: the carboxyltransferase alpha subunit (MmdA), the tunnel beta subunit (MmdB), the biotin-containing gamma subunit (MmdC) and the delta subunit (MmdD).

It is found in the cell membrane. It catalyses the reaction (S)-methylmalonyl-CoA + Na(+)(in) + H(+)(out) = propanoyl-CoA + Na(+)(out) + CO2. Its function is as follows. Subunit of the sodium ion pump methylmalonyl-CoA decarboxylase, which converts the chemical energy of a decarboxylation reaction into an electrochemical gradient of Na(+) ions across the cytoplasmic membrane, thereby creating a sodium ion motive force that is used for ATP synthesis. The delta subunit is required for catalytic activity as well as for the proper assembly of the individual subunits to an enzyme complex. This is Methylmalonyl-CoA decarboxylase subunit delta from Propionigenium modestum.